A 338-amino-acid chain; its full sequence is 1-aminocyclopropane-1-carboxylate deaminase (338 aa).

N6-(pyridoxal phosphate)lysine is present on Lys51. Catalysis depends on Ser78, which acts as the Nucleophile.

It belongs to the ACC deaminase/D-cysteine desulfhydrase family. In terms of assembly, homotrimer. The cofactor is pyridoxal 5'-phosphate.

It catalyses the reaction 1-aminocyclopropane-1-carboxylate + H2O = 2-oxobutanoate + NH4(+). Functionally, catalyzes a cyclopropane ring-opening reaction, the irreversible conversion of 1-aminocyclopropane-1-carboxylate (ACC) to ammonia and alpha-ketobutyrate. Allows growth on ACC as a nitrogen source. The polypeptide is 1-aminocyclopropane-1-carboxylate deaminase (Variovorax paradoxus (strain S110)).